A 431-amino-acid chain; its full sequence is MNFDVVIIGAGIAGLTCGLTLQEKGVRCAIINNGQAALDFSSGSMDLLSRLPNGSTVDSFAQSYAALAQQSPNHPYVILGKDVVLDKIQQFETLAKSLNLSLVGSSDKNHKRVTALGGLRGTWLSPNSVPTVSLEGKFPHDNIVLLGIEGYHDFQPQLLADNLKQNPQFAHCEITTNFLHIPELDHLRQNSREFRSVNIAQVLEYKLSFNNLVDEIKQAVGNAKAAFLPACFGLDDQSFFESLKQATGIELYELPTLPPSLLGIRQHRQLRHRFEKLGGVMFNGDRALRSEFEGNKVARIFTQLHLENAVTAKYFVLASGGFFSNGLVSEFEEIYEPLFRSDIVKTERFNATDRFSWISKRFADPQPYQSAGVVINAECQVQKDGNNVENLFAIGAVIGGYNGIELGCGSGVAVTTALKVADNIIAKESSN.

The protein belongs to the anaerobic G-3-P dehydrogenase subunit B family. As to quaternary structure, composed of a catalytic GlpA/B dimer and of membrane bound GlpC. The cofactor is FMN.

It catalyses the reaction a quinone + sn-glycerol 3-phosphate = dihydroxyacetone phosphate + a quinol. It participates in polyol metabolism; glycerol degradation via glycerol kinase pathway; glycerone phosphate from sn-glycerol 3-phosphate (anaerobic route): step 1/1. Its function is as follows. Conversion of glycerol 3-phosphate to dihydroxyacetone. Uses fumarate or nitrate as electron acceptor. This is Anaerobic glycerol-3-phosphate dehydrogenase subunit B from Mannheimia succiniciproducens (strain KCTC 0769BP / MBEL55E).